A 324-amino-acid chain; its full sequence is uncharacterized protein (324 aa).

8 consecutive transmembrane segments (helical) span residues 5–24 (VIGI…NRAM), 39–61 (FIFM…PLLL), 68–90 (FYWI…FAAA), 95–117 (WLIA…LFYV), 130–152 (QKIP…LIQL), 162–179 (MLLF…AYPL), 199–218 (LGMT…YGWW), and 228–250 (TVQS…FWAT).

The protein localises to the cell membrane. This is an uncharacterized protein from Bacillus subtilis (strain 168).